The sequence spans 574 residues: Pentatricopeptide repeat-containing protein At5g25630 (574 aa).

Positions 1–21 (MEDVNQEKKKVPPMSEPERST) are enriched in basic and acidic residues. The segment at 1–25 (MEDVNQEKKKVPPMSEPERSTPIKT) is disordered. PPR repeat units follow at residues 44–78 (TVRS…GHRP), 79–113 (SLIS…GTKL), 114–148 (DSIF…GLNP), 149–183 (TTST…GNVD), 187–221 (NIRT…GVRP), 222–258 (DTVT…KAKP), 259–293 (NGRT…RVEA), 294–328 (NLVV…NVKA), 329–363 (DVIT…GVKP), 364–394 (DAHA…LIVE), 398–432 (NVVI…GVSP), and 433–467 (NIKT…GVKP).

Belongs to the PPR family. P subfamily.

The polypeptide is Pentatricopeptide repeat-containing protein At5g25630 (Arabidopsis thaliana (Mouse-ear cress)).